We begin with the raw amino-acid sequence, 581 residues long: Proline--tRNA ligase (581 aa).

Belongs to the class-II aminoacyl-tRNA synthetase family. ProS type 1 subfamily. Homodimer.

The protein resides in the cytoplasm. It carries out the reaction tRNA(Pro) + L-proline + ATP = L-prolyl-tRNA(Pro) + AMP + diphosphate. Catalyzes the attachment of proline to tRNA(Pro) in a two-step reaction: proline is first activated by ATP to form Pro-AMP and then transferred to the acceptor end of tRNA(Pro). As ProRS can inadvertently accommodate and process non-cognate amino acids such as alanine and cysteine, to avoid such errors it has two additional distinct editing activities against alanine. One activity is designated as 'pretransfer' editing and involves the tRNA(Pro)-independent hydrolysis of activated Ala-AMP. The other activity is designated 'posttransfer' editing and involves deacylation of mischarged Ala-tRNA(Pro). The misacylated Cys-tRNA(Pro) is not edited by ProRS. The protein is Proline--tRNA ligase of Delftia acidovorans (strain DSM 14801 / SPH-1).